Here is a 121-residue protein sequence, read N- to C-terminus: Small ribosomal subunit protein uS13 (121 aa).

The tract at residues 93 to 121 (RGLPVRGQNSKNNARTRKGPRRTVANKKK) is disordered. Residues 106–121 (ARTRKGPRRTVANKKK) are compositionally biased toward basic residues.

The protein belongs to the universal ribosomal protein uS13 family. As to quaternary structure, part of the 30S ribosomal subunit. Forms a loose heterodimer with protein S19. Forms two bridges to the 50S subunit in the 70S ribosome.

Its function is as follows. Located at the top of the head of the 30S subunit, it contacts several helices of the 16S rRNA. In the 70S ribosome it contacts the 23S rRNA (bridge B1a) and protein L5 of the 50S subunit (bridge B1b), connecting the 2 subunits; these bridges are implicated in subunit movement. Contacts the tRNAs in the A and P-sites. The chain is Small ribosomal subunit protein uS13 from Bacillus subtilis (strain 168).